A 378-amino-acid polypeptide reads, in one-letter code: 3-dehydroquinate synthase (378 aa).

Residues 115–119, 139–140, lysine 152, and lysine 161 contribute to the NAD(+) site; these read GVVGD and TS. Positions 194, 256, and 275 each coordinate Zn(2+).

It belongs to the sugar phosphate cyclases superfamily. Dehydroquinate synthase family. It depends on Co(2+) as a cofactor. Zn(2+) is required as a cofactor. NAD(+) serves as cofactor.

The protein resides in the cytoplasm. It carries out the reaction 7-phospho-2-dehydro-3-deoxy-D-arabino-heptonate = 3-dehydroquinate + phosphate. The protein operates within metabolic intermediate biosynthesis; chorismate biosynthesis; chorismate from D-erythrose 4-phosphate and phosphoenolpyruvate: step 2/7. Catalyzes the conversion of 3-deoxy-D-arabino-heptulosonate 7-phosphate (DAHP) to dehydroquinate (DHQ). The chain is 3-dehydroquinate synthase from Brucella abortus biovar 1 (strain 9-941).